The chain runs to 240 residues: MGRIFETRKATMMARWNKMAKVFTRISKDIAIAVKAGGPNPDSNSTLRRVLQNARAANMPKDKVDAAIKRASGQSATDYEIVLYEGYAPHGIALLVETATDNVVRTVANVRMHFNKHSGNLGTAGSVAFMFQRMGVFRLNPEGLDLDSLELELIDHGLQEMGEGVGEKGEKQIIIRSAFADFGQLQAAIEAKGLVPVSADSEYVALNPIELPEDKATEVLELVDALEQDDDVQRVFHNLA.

This sequence belongs to the TACO1 family.

The protein localises to the cytoplasm. This is Probable transcriptional regulatory protein MXAN_7062 from Myxococcus xanthus (strain DK1622).